Reading from the N-terminus, the 346-residue chain is Uroporphyrinogen decarboxylase (346 aa).

Substrate-binding positions include 21 to 25, Phe-40, Asp-71, Tyr-146, Ser-201, and His-316; that span reads RQAGR.

It belongs to the uroporphyrinogen decarboxylase family. In terms of assembly, homodimer.

Its subcellular location is the cytoplasm. The catalysed reaction is uroporphyrinogen III + 4 H(+) = coproporphyrinogen III + 4 CO2. The protein operates within porphyrin-containing compound metabolism; protoporphyrin-IX biosynthesis; coproporphyrinogen-III from 5-aminolevulinate: step 4/4. Functionally, catalyzes the decarboxylation of four acetate groups of uroporphyrinogen-III to yield coproporphyrinogen-III. The chain is Uroporphyrinogen decarboxylase from Rickettsia felis (strain ATCC VR-1525 / URRWXCal2) (Rickettsia azadi).